We begin with the raw amino-acid sequence, 38 residues long: Toxin Bcg III 31.16 (38 aa).

Cystine bridges form between Cys4–Cys37, Cys6–Cys30, and Cys20–Cys38.

The protein belongs to the sea anemone type 3 (BDS) potassium channel toxin family.

It is found in the secreted. The protein localises to the nematocyst. In terms of biological role, possible modulator of crustacean voltage-gated sodium channels (Nav). In Bunodosoma cangicum (Sea anemone), this protein is Toxin Bcg III 31.16.